A 324-amino-acid polypeptide reads, in one-letter code: Putative F-box/kelch-repeat protein At5g28160 (324 aa).

Residues 7–54 (RPSFLSLPDEIILSCLARISRSYYPKLSLVCKTFRTLLISNELIVARL) form the F-box domain. One copy of the Kelch repeat lies at 170 to 216 (KIYVMGGCMADESVNWGEVFDIKTQTWEALPDPGPEFRFSSIRKIDV).

The protein is Putative F-box/kelch-repeat protein At5g28160 of Arabidopsis thaliana (Mouse-ear cress).